Reading from the N-terminus, the 388-residue chain is Phosphopentomutase (388 aa).

The Mn(2+) site is built by Asp-10, Asp-282, His-287, Asp-323, His-324, and His-335.

This sequence belongs to the phosphopentomutase family. Mn(2+) serves as cofactor.

It localises to the cytoplasm. The catalysed reaction is 2-deoxy-alpha-D-ribose 1-phosphate = 2-deoxy-D-ribose 5-phosphate. It carries out the reaction alpha-D-ribose 1-phosphate = D-ribose 5-phosphate. It functions in the pathway carbohydrate degradation; 2-deoxy-D-ribose 1-phosphate degradation; D-glyceraldehyde 3-phosphate and acetaldehyde from 2-deoxy-alpha-D-ribose 1-phosphate: step 1/2. Functionally, isomerase that catalyzes the conversion of deoxy-ribose 1-phosphate (dRib-1-P) and ribose 1-phosphate (Rib-1-P) to deoxy-ribose 5-phosphate (dRib-5-P) and ribose 5-phosphate (Rib-5-P), respectively. This is Phosphopentomutase from Desulfitobacterium hafniense (strain DSM 10664 / DCB-2).